Here is a 548-residue protein sequence, read N- to C-terminus: Membrane protein insertase YidC (548 aa).

5 helical membrane-spanning segments follow: residues N6–D26, T349–V369, L424–L444, F455–M475, and P503–V523.

The protein belongs to the OXA1/ALB3/YidC family. Type 1 subfamily. Interacts with the Sec translocase complex via SecD. Specifically interacts with transmembrane segments of nascent integral membrane proteins during membrane integration.

It localises to the cell inner membrane. Its function is as follows. Required for the insertion and/or proper folding and/or complex formation of integral membrane proteins into the membrane. Involved in integration of membrane proteins that insert both dependently and independently of the Sec translocase complex, as well as at least some lipoproteins. Aids folding of multispanning membrane proteins. This chain is Membrane protein insertase YidC, found in Aeromonas salmonicida (strain A449).